Here is a 76-residue protein sequence, read N- to C-terminus: UPF0291 protein BA_1897/GBAA_1897/BAS1759 (76 aa).

It belongs to the UPF0291 family.

It is found in the cytoplasm. This is UPF0291 protein BA_1897/GBAA_1897/BAS1759 from Bacillus anthracis.